Here is a 293-residue protein sequence, read N- to C-terminus: GTPase Era (293 aa).

Residues 3 to 170 (KSGFITIIGR…VELMVKYMPE (168 aa)) enclose the Era-type G domain. The segment at 11–18 (GRPNVGKS) is G1. 11–18 (GRPNVGKS) is a GTP binding site. Residues 37–41 (QTTRN) are G2. The segment at 58–61 (DTPG) is G3. GTP is bound by residues 58–62 (DTPGI) and 120–123 (NKID). The tract at residues 120 to 123 (NKID) is G4. The interval 149 to 151 (ISA) is G5. The 78-residue stretch at 201-278 (LSKEVPHGIA…YLEVWVKVKK (78 aa)) folds into the KH type-2 domain.

Belongs to the TRAFAC class TrmE-Era-EngA-EngB-Septin-like GTPase superfamily. Era GTPase family. As to quaternary structure, monomer.

It is found in the cytoplasm. The protein resides in the cell membrane. An essential GTPase that binds both GDP and GTP, with rapid nucleotide exchange. Plays a role in 16S rRNA processing and 30S ribosomal subunit biogenesis and possibly also in cell cycle regulation and energy metabolism. The protein is GTPase Era of Clostridium kluyveri (strain NBRC 12016).